The chain runs to 205 residues: Putative 3-methyladenine DNA glycosylase (205 aa).

The protein belongs to the DNA glycosylase MPG family.

This is Putative 3-methyladenine DNA glycosylase from Bacillus cereus (strain Q1).